The primary structure comprises 340 residues: Sodium/bile acid cotransporter 7 (340 aa).

Over 1–10 (MRLLERARKE) the chain is Cytoplasmic. The helical transmembrane segment at 11 to 31 (WFMVGIVVAIGAAKLEPSVGV) threads the bilayer. Topologically, residues 32 to 37 (NGGPLK) are extracellular. The helical transmembrane segment at 38 to 58 (PEITVSYIAVATIFFNSGLSL) threads the bilayer. Residues 59–71 (KTEELTSALVHLR) lie on the Cytoplasmic side of the membrane. The helical transmembrane segment at 72–92 (LHLFIQIFTLAFFPAAIWLFL) threads the bilayer. The Extracellular portion of the chain corresponds to 93 to 116 (QLLSVTSINEWLLKGLQTVGCMPP). A helical transmembrane segment spans residues 117 to 137 (PVSSAVILTKAVGGNEAAAIF). Residue N138 is a topological domain, cytoplasmic. The chain crosses the membrane as a helical span at residues 139–159 (SAFGSFLGIVVTPVLLLLFLG). Topologically, residues 160 to 163 (SSSS) are extracellular. A helical membrane pass occupies residues 164–184 (VPFTSIFSQLFMTVVVPLVIG). Over 185–201 (QIVRRYIKDWLERKKPP) the chain is Cytoplasmic. Residues 202–222 (FGVVSSSVLLMIIYTTFCDTF) form a helical membrane-spanning segment. The Extracellular segment spans residues 223 to 234 (SNPNIDLDKFSL). The chain crosses the membrane as a helical span at residues 235-255 (ILILFIIVSVQLSFMLLTFIF). At 256-270 (STRNNSGFTPADTVA) the chain is on the cytoplasmic side. Residues 271 to 291 (IIFCSTHKSLTLGIPMLKIVF) traverse the membrane as a helical segment. The Extracellular portion of the chain corresponds to 292–298 (AGHEHLS). Residues 299–319 (LISVPLLIYHPAQILLGSVLV) form a helical membrane-spanning segment. The Cytoplasmic portion of the chain corresponds to 320 to 340 (PTIKSWMVSRQKGVKLTRPTV).

Belongs to the bile acid:sodium symporter (BASS) (TC 2.A.28) family. As to expression, expressed in heart, brain, colon, lung, liver, adrenal gland, stomach and ovary. Also expressed weakly in small intestine. Expressed in skeletal tissues.

The protein localises to the cell membrane. The protein resides in the endoplasmic reticulum membrane. It is found in the golgi apparatus membrane. Involved in teeth and skeletal development. Has an essential role in the biosynthesis and trafficking of glycosaminoglycans and glycoproteins to produce a proper functioning extracellular matrix. Required for extracellular matrix mineralization. Also involved in the regulation of cellular calcium homeostasis. Does not show transport activity towards bile acids or steroid sulfates (including taurocholate, cholate, chenodeoxycholate, estrone-3-sulfate, dehydroepiandrosterone sulfate (DHEAS) and pregnenolone sulfate). The polypeptide is Sodium/bile acid cotransporter 7 (Slc10a7) (Mus musculus (Mouse)).